Consider the following 95-residue polypeptide: Large ribosomal subunit protein bL25 (95 aa).

The protein belongs to the bacterial ribosomal protein bL25 family. Part of the 50S ribosomal subunit; part of the 5S rRNA/L5/L18/L25 subcomplex. Contacts the 5S rRNA. Binds to the 5S rRNA independently of L5 and L18.

Its function is as follows. This is one of the proteins that binds to the 5S RNA in the ribosome where it forms part of the central protuberance. The polypeptide is Large ribosomal subunit protein bL25 (Shewanella baltica (strain OS223)).